Here is a 383-residue protein sequence, read N- to C-terminus: ATP phosphoribosyltransferase regulatory subunit (383 aa).

The protein belongs to the class-II aminoacyl-tRNA synthetase family. HisZ subfamily. Heteromultimer composed of HisG and HisZ subunits.

The protein resides in the cytoplasm. It functions in the pathway amino-acid biosynthesis; L-histidine biosynthesis; L-histidine from 5-phospho-alpha-D-ribose 1-diphosphate: step 1/9. Required for the first step of histidine biosynthesis. May allow the feedback regulation of ATP phosphoribosyltransferase activity by histidine. This Lactiplantibacillus plantarum (strain ATCC BAA-793 / NCIMB 8826 / WCFS1) (Lactobacillus plantarum) protein is ATP phosphoribosyltransferase regulatory subunit.